The primary structure comprises 217 residues: 3,4-dihydroxy-2-butanone 4-phosphate synthase (217 aa).

D-ribulose 5-phosphate-binding positions include 37 to 38 (RE), Asp42, 150 to 154 (RRGHT), and Glu174. Mg(2+) is bound at residue Glu38. His153 serves as a coordination point for Mg(2+).

Belongs to the DHBP synthase family. Homodimer. Requires Mg(2+) as cofactor. Mn(2+) serves as cofactor.

It carries out the reaction D-ribulose 5-phosphate = (2S)-2-hydroxy-3-oxobutyl phosphate + formate + H(+). It functions in the pathway cofactor biosynthesis; riboflavin biosynthesis; 2-hydroxy-3-oxobutyl phosphate from D-ribulose 5-phosphate: step 1/1. Functionally, catalyzes the conversion of D-ribulose 5-phosphate to formate and 3,4-dihydroxy-2-butanone 4-phosphate. This chain is 3,4-dihydroxy-2-butanone 4-phosphate synthase, found in Shewanella woodyi (strain ATCC 51908 / MS32).